Reading from the N-terminus, the 95-residue chain is MKLVVIVLLVISVSILVSAQELGGSRRYCGRHLAQTMAVLCWGIDEMSAEKRNSDMVYEDSGMPELLPADTRKKRGIIDECCLQACTRDVLLSYC.

The signal sequence occupies residues 1 to 19; sequence MKLVVIVLLVISVSILVSA. 3 disulfides stabilise this stretch: cysteine 29–cysteine 82, cysteine 41–cysteine 95, and cysteine 81–cysteine 86. A propeptide spans 53–71 (c peptide like); that stretch reads NSDMVYEDSGMPELLPADT.

The protein belongs to the insulin family. Heterodimer of a B chain and an A chain linked by two disulfide bonds.

It localises to the secreted. This is Bombyxin F-1 (BBXF1) from Bombyx mori (Silk moth).